The chain runs to 263 residues: Indole-3-glycerol phosphate synthase (263 aa).

The protein belongs to the TrpC family.

The enzyme catalyses 1-(2-carboxyphenylamino)-1-deoxy-D-ribulose 5-phosphate + H(+) = (1S,2R)-1-C-(indol-3-yl)glycerol 3-phosphate + CO2 + H2O. The protein operates within amino-acid biosynthesis; L-tryptophan biosynthesis; L-tryptophan from chorismate: step 4/5. This is Indole-3-glycerol phosphate synthase from Aliarcobacter butzleri (strain RM4018) (Arcobacter butzleri).